The primary structure comprises 323 residues: Pseudouridylate synthase TRUB2, mitochondrial (323 aa).

Residue D98 is the Nucleophile of the active site. Positions 302 to 323 (SGHQQQLPSAGQPWASRVQAPL) are disordered.

It belongs to the pseudouridine synthase TruB family. As to quaternary structure, forms a regulatory protein-RNA complex, consisting of RCC1L, NGRN, RPUSD3, RPUSD4, TRUB2, FASTKD2 and 16S mt-rRNA.

It localises to the mitochondrion matrix. It catalyses the reaction a uridine in mRNA = a pseudouridine in mRNA. It carries out the reaction uridine(55) in tRNA = pseudouridine(55) in tRNA. Functionally, minor enzyme contributing to the isomerization of uridine to pseudouridine (pseudouridylation) of specific mitochondrial mRNAs (mt-mRNAs) such as COXI and COXIII mt-mRNAs. As a component of a functional protein-RNA module, consisting of RCC1L, NGRN, RPUSD3, RPUSD4, TRUB2, FASTKD2 and 16S mitochondrial ribosomal RNA (16S mt-rRNA), controls 16S mt-rRNA abundance and is required for intra-mitochondrial translation. Also catalyzes pseudouridylation of some tRNAs, including synthesis of pseudouridine(55) from uracil-55, in the psi GC loop of a subset of tRNAs. The polypeptide is Pseudouridylate synthase TRUB2, mitochondrial (Rattus norvegicus (Rat)).